The chain runs to 843 residues: Protein P (843 aa).

The segment at 1 to 177 (MPLSYPHFRK…FCGSPYSWEQ (177 aa)) is terminal protein domain (TP). The spacer stretch occupies residues 178–346 (ELQHGSTSLN…YCLSHIINLL (169 aa)). The segment at 284–308 (EANPSLSTSKRHTSTGNAVELNPVP) is disordered. The segment at 347–690 (EDWGPCYEHG…YMNLYPVARQ (344 aa)) is polymerase/reverse transcriptase domain (RT). The Reverse transcriptase domain maps to 357–600 (QHHIRTPRTP…YNLHFMGYVI (244 aa)). Residues Asp429, Asp551, and Asp552 each coordinate Mg(2+).

Belongs to the hepadnaviridae P protein family.

The catalysed reaction is DNA(n) + a 2'-deoxyribonucleoside 5'-triphosphate = DNA(n+1) + diphosphate. It carries out the reaction Endonucleolytic cleavage to 5'-phosphomonoester.. Its activity is regulated as follows. Activated by host HSP70 and HSP40 in vitro to be able to bind the epsilon loop of the pgRNA. Because deletion of the RNase H region renders the protein partly chaperone-independent, the chaperones may be needed indirectly to relieve occlusion of the RNA-binding site by this domain. Inhibited by several reverse-transcriptase inhibitors: Lamivudine, Adefovir and Entecavir. Functionally, multifunctional enzyme that converts the viral RNA genome into dsDNA in viral cytoplasmic capsids. This enzyme displays a DNA polymerase activity that can copy either DNA or RNA templates, and a ribonuclease H (RNase H) activity that cleaves the RNA strand of RNA-DNA heteroduplexes in a partially processive 3'- to 5'-endonucleasic mode. Neo-synthesized pregenomic RNA (pgRNA) are encapsidated together with the P protein, and reverse-transcribed inside the nucleocapsid. Initiation of reverse-transcription occurs first by binding the epsilon loop on the pgRNA genome, and is initiated by protein priming, thereby the 5'-end of (-)DNA is covalently linked to P protein. Partial (+)DNA is synthesized from the (-)DNA template and generates the relaxed circular DNA (RC-DNA) genome. After budding and infection, the RC-DNA migrates in the nucleus, and is converted into a plasmid-like covalently closed circular DNA (cccDNA). The activity of P protein does not seem to be necessary for cccDNA generation, and is presumably released from (+)DNA by host nuclear DNA repair machinery. This is Protein P from Homo sapiens (Human).